The chain runs to 79 residues: Polcalcin Bra r 1 (79 aa).

2 EF-hand domains span residues 1 to 36 (MADA…LGSV) and 39 to 71 (DDVT…NPGL). Residues D14, D16, D18, K20, E25, D49, D51, D53, N55, and E60 each coordinate Ca(2+).

This is Polcalcin Bra r 1 from Brassica campestris (Field mustard).